The chain runs to 462 residues: Kinetochore protein Nuf2-B (462 aa).

The stretch at 143-462 forms a coiled coil; the sequence is SGYKSALENV…AELNRRLSRQ (320 aa). Residues 236–259 form a disordered region; the sequence is EQERMKSQIVESPEQRKSKTERMK. Over residues 248–259 the composition is skewed to basic and acidic residues; it reads PEQRKSKTERMK.

This sequence belongs to the NUF2 family. As to quaternary structure, component of the NDC80 complex, which is composed of ndc80, cdca1, spbc24 and spbc25. The NDC80 complex interacts with mis12 and zwint.

Its subcellular location is the nucleus. The protein localises to the chromosome. The protein resides in the centromere. It is found in the kinetochore. Functionally, acts as a component of the essential kinetochore-associated NDC80 complex, which is required for chromosome segregation and spindle checkpoint activity. Required for kinetochore integrity and the organization of stable microtubule binding sites in the outer plate of the kinetochore. The NDC80 complex synergistically enhances the affinity of the SKA1 complex for microtubules and may allow the NDC80 complex to track depolymerizing microtubules. The sequence is that of Kinetochore protein Nuf2-B (nuf2-b) from Xenopus laevis (African clawed frog).